Reading from the N-terminus, the 257-residue chain is NAD-capped RNA hydrolase NudC (257 aa).

Substrate contacts are provided by K25 and R69. The Zn(2+) site is built by C98 and C101. Residue E111 coordinates substrate. The Zn(2+) site is built by C116 and C119. Y124 contributes to the substrate binding site. In terms of domain architecture, Nudix hydrolase spans 125–248; that stretch reads PQIAPCIIVA…TVARRLIEDT (124 aa). Positions 158, 174, and 178 each coordinate a divalent metal cation. A Nudix box motif is present at residues 159 to 180; the sequence is GFVEVGETLEQAVAREVMEESG. 192–199 serves as a coordination point for substrate; that stretch reads QPWPFPQS. Residue E219 coordinates a divalent metal cation. A241 serves as a coordination point for substrate.

It belongs to the Nudix hydrolase family. NudC subfamily. In terms of assembly, homodimer. The cofactor is Mg(2+). Mn(2+) is required as a cofactor. It depends on Zn(2+) as a cofactor.

It catalyses the reaction a 5'-end NAD(+)-phospho-ribonucleoside in mRNA + H2O = a 5'-end phospho-adenosine-phospho-ribonucleoside in mRNA + beta-nicotinamide D-ribonucleotide + 2 H(+). The catalysed reaction is NAD(+) + H2O = beta-nicotinamide D-ribonucleotide + AMP + 2 H(+). The enzyme catalyses NADH + H2O = reduced beta-nicotinamide D-ribonucleotide + AMP + 2 H(+). Functionally, mRNA decapping enzyme that specifically removes the nicotinamide adenine dinucleotide (NAD) cap from a subset of mRNAs by hydrolyzing the diphosphate linkage to produce nicotinamide mononucleotide (NMN) and 5' monophosphate mRNA. The NAD-cap is present at the 5'-end of some mRNAs and stabilizes RNA against 5'-processing. Has preference for mRNAs with a 5'-end purine. Catalyzes the hydrolysis of a broad range of dinucleotide pyrophosphates. This chain is NAD-capped RNA hydrolase NudC, found in Escherichia fergusonii (strain ATCC 35469 / DSM 13698 / CCUG 18766 / IAM 14443 / JCM 21226 / LMG 7866 / NBRC 102419 / NCTC 12128 / CDC 0568-73).